The primary structure comprises 147 residues: Hemoglobin subunit beta-1 (147 aa).

At Val2 the chain carries N-acetylvaline. Positions His3–His147 constitute a Globin domain. N6-succinyllysine is present on Lys18. 3 positions are modified to phosphoserine: Ser45, Ser51, and Ser53. Lys60 bears the N6-succinyllysine mark. 2 residues coordinate heme b: His64 and His93. An Asymmetric dimethylarginine modification is found at Arg105. Thr124 bears the Phosphothreonine mark.

It belongs to the globin family. In terms of assembly, heterotetramer of two alpha chains and two beta chains. As to expression, red blood cells.

Its function is as follows. Involved in oxygen transport from the lung to the various peripheral tissues. The polypeptide is Hemoglobin subunit beta-1 (Hbb) (Rattus norvegicus (Rat)).